A 450-amino-acid polypeptide reads, in one-letter code: Calcium-binding and coiled-coil domain-containing protein 2 (450 aa).

The CLIR motif lies at Ile133–Val136. A coiled-coil region spans residues Val135–Met349. Residues Asp203 to Glu206 carry the LIR-like motif. The interval Asp371–Ser381 is interaction with LGALS8. Positions Lys395–Leu450 are interaction with MYO6. The UBZ1-type zinc-finger motif lies at Ser423–His448. Residues Cys426, Cys429, His444, and His448 each coordinate Zn(2+).

It belongs to the CALCOCO family. As to quaternary structure, dimer. Part of a complex consisting of CALCOCO2, TAX1BP1 and MYO6. Interacts with GEMIN4. Interacts with ATG8 family members MAP1LC3A, MAP1LC3B, GABARAP, GABARAPL1 and GABARAPL2. Interacts with ATG8 family member MAP1LC3C. Interacts with LGALS8. Interacts with TOM1; the interaction is indirect and is mediated by MYO6, which acts as a bridge between TOM1 and CALCOCO2. Interacts with AZI2.

The protein localises to the cytoplasm. The protein resides in the perinuclear region. Its subcellular location is the cytoskeleton. It localises to the cytoplasmic vesicle. It is found in the autophagosome membrane. In terms of biological role, xenophagy-specific receptor required for autophagy-mediated intracellular bacteria degradation. Acts as an effector protein of galectin-sensed membrane damage that restricts the proliferation of infecting pathogens upon entry into the cytosol by targeting LGALS8-associated bacteria for autophagy. Initially orchestrates bacteria targeting to autophagosomes and subsequently ensures pathogen degradation by regulating pathogen-containing autophagosome maturation. Bacteria targeting to autophagosomes relies on its interaction with MAP1LC3A, MAP1LC3B and/or GABARAPL2, whereas regulation of pathogen-containing autophagosome maturation requires the interaction with MAP3LC3C. May play a role in ruffle formation and actin cytoskeleton organization and seems to negatively regulate constitutive secretion. The sequence is that of Calcium-binding and coiled-coil domain-containing protein 2 from Bos taurus (Bovine).